The primary structure comprises 1197 residues: Disease resistance-like protein CSA1 (1197 aa).

In terms of domain architecture, TIR spans 15 to 178 (PQDQVFINFR…IIIRKVKEIL (164 aa)). E89 is a catalytic residue. The region spanning 210-480 (RIKQLEEKLR…ACFRSQDENY (271 aa)) is the NB-ARC domain. LRR repeat units follow at residues 614 to 636 (LNEVRYLHWLKFPLKEVPQDFNP), 638 to 659 (NLVDLKLPYSEIERVWEDNKDA), 694 to 716 (TALKEMHVDMENMKFLVFLNLRG), 728 to 749 (LISLKTLILSGCSKFKTFQVIS), 750 to 774 (DKLEALYLDGTAIKELPCDIGRLQR), 776 to 796 (VMLNMKGCKKLKRLPDSLGQL), 797 to 819 (KALEELILSGCSKLNEFPETWGN), 820 to 843 (MSRLEILLLDETAIKDMPKILSVR), 845 to 862 (LCLNKNEKISRLPDLLNK), and 863 to 889 (FSQLQWLHLKYCKNLTHVPQLPPNLQY).

The enzyme catalyses NAD(+) + H2O = ADP-D-ribose + nicotinamide + H(+). Its function is as follows. TIR-NB-LRR receptor-like protein that functions in photomorphogenic development. May function downstream of phytochrome B (phyB) signaling. The protein is Disease resistance-like protein CSA1 of Arabidopsis thaliana (Mouse-ear cress).